The chain runs to 542 residues: CTP synthase (542 aa).

An amidoligase domain region spans residues 1–265 (MARYVFITGG…DSEVLSAFGI (265 aa)). CTP is bound at residue Ser13. Ser13 is a UTP binding site. Residue 14-19 (SLGKGI) coordinates ATP. L-glutamine is bound at residue Tyr54. Asp71 lines the ATP pocket. 2 residues coordinate Mg(2+): Asp71 and Glu139. Residues 146–148 (DIE), 186–191 (KTKPTQ), and Lys222 contribute to the CTP site. UTP contacts are provided by residues 186–191 (KTKPTQ) and Lys222. The Glutamine amidotransferase type-1 domain maps to 291–541 (TIAVVGKYTG…IEAAIEQSRL (251 aa)). Position 353 (Gly353) interacts with L-glutamine. The active-site Nucleophile; for glutamine hydrolysis is Cys380. Residues 381–384 (FGMQ), Glu404, and Arg469 contribute to the L-glutamine site. Catalysis depends on residues His514 and Glu516.

The protein belongs to the CTP synthase family. As to quaternary structure, homotetramer.

It carries out the reaction UTP + L-glutamine + ATP + H2O = CTP + L-glutamate + ADP + phosphate + 2 H(+). It catalyses the reaction L-glutamine + H2O = L-glutamate + NH4(+). The catalysed reaction is UTP + NH4(+) + ATP = CTP + ADP + phosphate + 2 H(+). The protein operates within pyrimidine metabolism; CTP biosynthesis via de novo pathway; CTP from UDP: step 2/2. With respect to regulation, allosterically activated by GTP, when glutamine is the substrate; GTP has no effect on the reaction when ammonia is the substrate. The allosteric effector GTP functions by stabilizing the protein conformation that binds the tetrahedral intermediate(s) formed during glutamine hydrolysis. Inhibited by the product CTP, via allosteric rather than competitive inhibition. Its function is as follows. Catalyzes the ATP-dependent amination of UTP to CTP with either L-glutamine or ammonia as the source of nitrogen. Regulates intracellular CTP levels through interactions with the four ribonucleotide triphosphates. The chain is CTP synthase from Brucella melitensis biotype 1 (strain ATCC 23456 / CCUG 17765 / NCTC 10094 / 16M).